A 715-amino-acid polypeptide reads, in one-letter code: Scinderin (715 aa).

The actin-severing stretch occupies residues 1 to 363 (MARELYHEEF…DGFGKVYVTE (363 aa)). Residues 27–76 (LELVPVPQSAHGDFYVGDAYLVLHTAKTSRGFTYHLHFWLGKECSQDEST) form a Gelsolin-like 1 repeat. Tyrosine 102 carries the phosphotyrosine modification. Residues 112–119 (KGGLKYKA) and 138–146 (RLLHVKGRR) contribute to the a 1,2-diacyl-sn-glycero-3-phospho-(1D-myo-inositol-4,5-bisphosphate) site. 4 Gelsolin-like repeats span residues 148–188 (VRAT…YERL), 265–307 (VVAE…QERK), 398–451 (VEIW…DELT), and 523–564 (TRIV…EEEK). The segment at 364–715 (KVAQIKQIPF…WFLGWDSSKW (352 aa)) is ca(2+)-dependent actin binding. The Ca(2+) site is built by asparagine 538, aspartate 539, and glutamate 562. Tyrosine 599 is modified (phosphotyrosine). A Gelsolin-like 6 repeat occupies 626 to 668 (FVIEEIPGEFTQDDLAEDDVMLLDAWEQIFIWIGKDANEVEKK). Ca(2+)-binding residues include aspartate 643, aspartate 644, and glutamate 666.

This sequence belongs to the villin/gelsolin family. Expressed in megakaryocytes.

The protein localises to the cytoplasm. The protein resides in the cytoskeleton. It is found in the cell projection. Its subcellular location is the podosome. Its function is as follows. Ca(2+)-dependent actin filament-severing protein that has a regulatory function in exocytosis by affecting the organization of the microfilament network underneath the plasma membrane. Severing activity is inhibited by phosphatidylinositol 4,5-bis-phosphate (PIP2). In vitro, also has barbed end capping and nucleating activities in the presence of Ca(2+). Required for megakaryocyte differentiation, maturation, polyploidization and apoptosis with the release of platelet-like particles. Plays a role in osteoclastogenesis (OCG) and actin cytoskeletal organization in osteoclasts. Regulates chondrocyte proliferation and differentiation. Inhibits cell proliferation and tumorigenesis. Signaling is mediated by MAPK, p38 and JNK pathways. In Homo sapiens (Human), this protein is Scinderin.